A 202-amino-acid polypeptide reads, in one-letter code: Small ribosomal subunit protein uS5 (202 aa).

Positions 42–105 constitute an S5 DRBM domain; that stretch reads LKDEVLKIMP…ILAKLSIVPV (64 aa). Threonine 192 carries the phosphothreonine modification.

Belongs to the universal ribosomal protein uS5 family. As to quaternary structure, component of the small ribosomal subunit. Interacts with zinc finger protein ZNF277 (via zinc-finger domains); the interaction is direct; the interaction is extra-ribosomal. Interaction with ZNF277 competes with the binding of RPS2 to protein arginine methyltransferase PRMT3. In terms of processing, citrullinated by PADI4 in the Arg/Gly-rich region. Post-translationally, asymmetric arginine dimethylation by PRMT3 occurs at multiple sites in the Arg/Gly-rich region. Monoubiquitinated by RNF10 when a ribosome has stalled during translation, leading to its degradation by the proteasome. Deubiquitinated by USP10, preventing degradation by the proteasome and promoting 40S ribosome subunit recycling following ribosome dissociation.

It is found in the cytoplasm. The protein resides in the nucleus. Its subcellular location is the nucleolus. In terms of biological role, component of the ribosome, a large ribonucleoprotein complex responsible for the synthesis of proteins in the cell. The small ribosomal subunit (SSU) binds messenger RNAs (mRNAs) and translates the encoded message by selecting cognate aminoacyl-transfer RNA (tRNA) molecules. The large subunit (LSU) contains the ribosomal catalytic site termed the peptidyl transferase center (PTC), which catalyzes the formation of peptide bonds, thereby polymerizing the amino acids delivered by tRNAs into a polypeptide chain. The nascent polypeptides leave the ribosome through a tunnel in the LSU and interact with protein factors that function in enzymatic processing, targeting, and the membrane insertion of nascent chains at the exit of the ribosomal tunnel. Plays a role in the assembly and function of the 40S ribosomal subunit. Mutations in this protein affects the control of translational fidelity. Involved in nucleolar processing of pre-18S ribosomal RNA and ribosome assembly. This Cricetulus griseus (Chinese hamster) protein is Small ribosomal subunit protein uS5 (RPS2).